An 807-amino-acid chain; its full sequence is Mechanosensitive cation channel TMEM63A (807 aa).

Over 1–51 the chain is Extracellular; that stretch reads MTDSPFLELWQSRAVSVREQLGLGDRPNDSYCYNSAKNSTVLQGVTFGGIP. An N-linked (GlcNAc...) asparagine glycan is attached at N38. A helical transmembrane segment spans residues 52-74; it reads TVLLIDVSCFLFLILVFSIIRRR. Residues 75 to 134 lie on the Cytoplasmic side of the membrane; that stretch reads FWDYGRIALVSEADSEPRFQRLSSTSSSGQQDFENELGCCPWLTAIFRLHDDQILEWCGE. The chain crosses the membrane as a helical span at residues 135–167; sequence DAIHYLSFQRHIIFLLVVVSFLSLCVILPVNLS. The Extracellular segment spans residues 168 to 191; sequence GDLLDKDPYSFGRTTIANLQTDND. The helical transmembrane segment at 192–217 threads the bilayer; the sequence is LLWLHTIFAVIYLFLTVGFMRHHTQS. Over 218–416 the chain is Cytoplasmic; the sequence is IKYKEENLVR…CWKNLSIQGL (199 aa). The interval 219–414 is intracellular linker IL2; confers mechanosensitivity; the sequence is KYKEENLVRR…DICWKNLSIQ (196 aa). A helical membrane pass occupies residues 417 to 444; the sequence is RWWLQWLGINFTLFLGLFFLTTPSIILS. Topologically, residues 445–462 are extracellular; the sequence is TMDKFNVTKPIHALNNPI. The N-linked (GlcNAc...) asparagine glycan is linked to N450. Residues 463-490 form a helical membrane-spanning segment; sequence ISQFFPTLLLWSFSALLPSIVYYSTLLE. Topologically, residues 491-495 are cytoplasmic; it reads SHWTK. A helical transmembrane segment spans residues 496 to 532; sequence SGENQIMMTKVYIFLIFMVLILPSLGLTSLDFFFRWL. Residues 533–554 are Extracellular-facing; the sequence is FDKTSSEASIRLECVFLPDQGA. A helical transmembrane segment spans residues 555–586; it reads FFVNYVIASAFIGNGMELLRLPGLILYTFRMI. A gating helix region spans residues 555–586; that stretch reads FFVNYVIASAFIGNGMELLRLPGLILYTFRMI. Topologically, residues 587–606 are cytoplasmic; the sequence is MAKTAADRRNVKQNQAFQYE. A helical transmembrane segment spans residues 607 to 624; the sequence is FGAMYAWMLCVFTVIMAY. Over 625–628 the chain is Extracellular; it reads SITC. A helical membrane pass occupies residues 629–651; the sequence is PIIAPFGLIYILLKHMVDRHNLY. Residues 652–661 lie on the Cytoplasmic side of the membrane; the sequence is FIYLPAKLEK. A helical membrane pass occupies residues 662-689; that stretch reads GIHFAAVNQALAAPILCLFWLYFFSFLR. Residues 690-694 are Extracellular-facing; sequence LGMKA. Residues 695–709 form a helical membrane-spanning segment; it reads PATLFTFLVVLLTIL. The Cytoplasmic segment spans residues 710–807; it reads VCLAHTCFGY…GSVAAAPQEA (98 aa). Residue S739 is modified to Phosphoserine.

Belongs to the CSC1 (TC 1.A.17) family. As to quaternary structure, monomer. N-Glycosylated.

It localises to the lysosome membrane. It is found in the early endosome membrane. The protein localises to the cell membrane. It carries out the reaction Ca(2+)(in) = Ca(2+)(out). Mechanosensitive cation channel with low conductance and high activation threshold. In contrast to TMEM63B, does not show phospholipid scramblase activity. Acts as a regulator of lysosomal morphology by mediating lysosomal mechanosensitivity. Important for the baby's first breath and respiration throughout life. Upon lung inflation conducts cation currents in alveolar type 1 and 2 cells triggering lamellar body exocytosis and surfactant secretion into airspace. Also acts as an osmosensitive cation channel preferentially activated by hypotonic stress. This Pongo abelii (Sumatran orangutan) protein is Mechanosensitive cation channel TMEM63A (TMEM63A).